The chain runs to 305 residues: tRNA pseudouridine synthase B (305 aa).

Asp39 (nucleophile) is an active-site residue.

This sequence belongs to the pseudouridine synthase TruB family. Type 1 subfamily.

It catalyses the reaction uridine(55) in tRNA = pseudouridine(55) in tRNA. Functionally, responsible for synthesis of pseudouridine from uracil-55 in the psi GC loop of transfer RNAs. This chain is tRNA pseudouridine synthase B, found in Staphylococcus saprophyticus subsp. saprophyticus (strain ATCC 15305 / DSM 20229 / NCIMB 8711 / NCTC 7292 / S-41).